Consider the following 654-residue polypeptide: WD repeat-containing protein 70 (654 aa).

Disordered stretches follow at residues 1 to 26 (MERS…VTMG) and 43 to 175 (FEQT…DSHE). The span at 45–78 (QTRRTAVERSRKTLEAREKEEEMNREKELRRQNE) shows a compositional bias: basic and acidic residues. The segment covering 99-111 (RDTSSSESEQSSD) has biased composition (low complexity). The span at 147–164 (NEEEEEAEEEEEEEEEEE) shows a compositional bias: acidic residues. The segment covering 165–175 (NPVHKIPDSHE) has biased composition (basic and acidic residues). WD repeat units follow at residues 180 to 219 (HGTK…ASFK), 227 to 268 (CECH…ECIK), 281 to 321 (GHTA…KQKS), 330 to 369 (GKKV…HPKF), 376 to 415 (DSGT…KPLF), 421 to 466 (PTMF…RVYE), and 469 to 508 (ITDA…QRGA). Lys-296 is covalently cross-linked (Glycyl lysine isopeptide (Lys-Gly) (interchain with G-Cter in SUMO2)). Residue Lys-452 is modified to N6-acetyllysine. A compositionally biased stretch (basic and acidic residues) spans 540-565 (REPRQRSTRKQLEKDRLDPLKSHKPE). Residues 540–579 (REPRQRSTRKQLEKDRLDPLKSHKPEPPVAGPGRGGRVGT) form a disordered region. Thr-579 is modified (phosphothreonine). Residues Lys-590 and Lys-596 each participate in a glycyl lysine isopeptide (Lys-Gly) (interchain with G-Cter in SUMO2) cross-link. Phosphoserine occurs at positions 621 and 638. The tract at residues 630–654 (KTMFAQVESDDEEAKNEPEWKKRKI) is disordered. Over residues 644-654 (KNEPEWKKRKI) the composition is skewed to basic and acidic residues.

The protein belongs to the WD repeat GAD-1 family.

The polypeptide is WD repeat-containing protein 70 (WDR70) (Homo sapiens (Human)).